A 132-amino-acid chain; its full sequence is uncharacterized protein (132 aa).

Residue Lys-59 forms a Glycyl lysine isopeptide (Lys-Gly) (interchain with G-Cter in SAMP2) linkage.

It belongs to the OsmC/Ohr family.

This is an uncharacterized protein from Haloferax volcanii (strain ATCC 29605 / DSM 3757 / JCM 8879 / NBRC 14742 / NCIMB 2012 / VKM B-1768 / DS2) (Halobacterium volcanii).